The primary structure comprises 655 residues: p-hydroxybenzoic acid efflux pump subunit AaeB (655 aa).

Residues 1 to 12 lie on the Periplasmic side of the membrane; sequence MDIFSIANQHIR. A helical transmembrane segment spans residues 13-33; sequence FAVKLATAIVLALFVGFHFQL. Over 34–37 the chain is Cytoplasmic; that stretch reads ETPR. Residues 38–58 traverse the membrane as a helical segment; sequence WAVLTAAIVAAGPAFAAGGEP. At 59-68 the chain is on the periplasmic side; it reads YSGAIRYRGF. Residues 69 to 89 form a helical membrane-spanning segment; that stretch reads LRIIGTFIGCIAGLVIIIAMI. Residues 90 to 92 are Cytoplasmic-facing; sequence RAP. A helical transmembrane segment spans residues 93–113; that stretch reads LLMILVCCIWAGFCTWISSLV. The Periplasmic segment spans residues 114 to 120; that stretch reads RIENSYA. Residues 121–141 traverse the membrane as a helical segment; the sequence is WGLAGYTALIIVITIQPEPLL. Topologically, residues 142–151 are cytoplasmic; the sequence is TPQFAVERCS. Residues 152–172 traverse the membrane as a helical segment; that stretch reads EIVIGIVCAIMADLLFSPRSI. Topologically, residues 173-369 are periplasmic; it reads KQEVDRELES…RTTLSCILGT (197 aa). A helical membrane pass occupies residues 370-390; it reads LFWLWTGWTSGSGAMVMIAVV. Residues 391 to 406 are Cytoplasmic-facing; the sequence is TSLAMRLPNPRMVAID. A helical transmembrane segment spans residues 407–427; it reads FIYGTLAALPLGLLYFLVIIP. Topologically, residues 428–430 are periplasmic; it reads NTQ. Residues 431–451 traverse the membrane as a helical segment; it reads QSMLLLCISLAVLGFFLGIEV. The Cytoplasmic portion of the chain corresponds to 452–458; it reads QKRRLGS. The helical transmembrane segment at 459–479 threads the bilayer; it reads MGALASTINIIVLDNPMTFHF. Residues 480 to 481 lie on the Periplasmic side of the membrane; sequence SQ. Residues 482–502 form a helical membrane-spanning segment; it reads FLDSALGQIVGCVLAFTVILL. Residues 503–655 lie on the Cytoplasmic side of the membrane; sequence VRDKSRDRTG…HKYQHALTDS (153 aa).

The protein belongs to the aromatic acid exporter ArAE (TC 2.A.85) family.

The protein localises to the cell inner membrane. In terms of biological role, forms an efflux pump with AaeA. Could function as a metabolic relief valve, allowing to eliminate certain compounds when they accumulate to high levels in the cell. The chain is p-hydroxybenzoic acid efflux pump subunit AaeB from Escherichia coli O157:H7.